Reading from the N-terminus, the 509-residue chain is 2-isopropylmalate synthase (509 aa).

Positions 4–266 constitute a Pyruvate carboxyltransferase domain; that stretch reads VRIFDTTLRD…YTGIKTEEIY (263 aa). Mn(2+) contacts are provided by D13, H201, H203, and N237. The interval 390-509 is regulatory domain; the sequence is TLDYFHISTG…FDYQAKGEKQ (120 aa).

Belongs to the alpha-IPM synthase/homocitrate synthase family. LeuA type 1 subfamily. In terms of assembly, homodimer. Mn(2+) is required as a cofactor.

It is found in the cytoplasm. It carries out the reaction 3-methyl-2-oxobutanoate + acetyl-CoA + H2O = (2S)-2-isopropylmalate + CoA + H(+). It participates in amino-acid biosynthesis; L-leucine biosynthesis; L-leucine from 3-methyl-2-oxobutanoate: step 1/4. Its function is as follows. Catalyzes the condensation of the acetyl group of acetyl-CoA with 3-methyl-2-oxobutanoate (2-ketoisovalerate) to form 3-carboxy-3-hydroxy-4-methylpentanoate (2-isopropylmalate). In Carboxydothermus hydrogenoformans (strain ATCC BAA-161 / DSM 6008 / Z-2901), this protein is 2-isopropylmalate synthase.